Reading from the N-terminus, the 364-residue chain is Lipoyl synthase, chloroplastic (364 aa).

The N-terminal 70 residues, 1–70 (MEQTLFNPSI…PNVKKPEWLR (70 aa)), are a transit peptide targeting the chloroplast. Residues 32-52 (STNSPSSNTKTTTVTVPSKKT) show a composition bias toward low complexity. The segment at 32 to 64 (STNSPSSNTKTTTVTVPSKKTMGPYTGRDPNVK) is disordered. Residues C95, C100, C106, C126, C130, C133, and S341 each contribute to the [4Fe-4S] cluster site. One can recognise a Radical SAM core domain in the interval 109–330 (GGGDGIATAT…KEYGESIGFR (222 aa)).

The protein belongs to the radical SAM superfamily. Lipoyl synthase family. [4Fe-4S] cluster is required as a cofactor.

The protein resides in the plastid. It is found in the chloroplast. It catalyses the reaction [[Fe-S] cluster scaffold protein carrying a second [4Fe-4S](2+) cluster] + N(6)-octanoyl-L-lysyl-[protein] + 2 oxidized [2Fe-2S]-[ferredoxin] + 2 S-adenosyl-L-methionine + 4 H(+) = [[Fe-S] cluster scaffold protein] + N(6)-[(R)-dihydrolipoyl]-L-lysyl-[protein] + 4 Fe(3+) + 2 hydrogen sulfide + 2 5'-deoxyadenosine + 2 L-methionine + 2 reduced [2Fe-2S]-[ferredoxin]. It participates in protein modification; protein lipoylation via endogenous pathway; protein N(6)-(lipoyl)lysine from octanoyl-[acyl-carrier-protein]: step 2/2. Its function is as follows. Catalyzes the radical-mediated insertion of two sulfur atoms into the C-6 and C-8 positions of the octanoyl moiety bound to the lipoyl domains of lipoate-dependent enzymes, thereby converting the octanoylated domains into lipoylated derivatives. This chain is Lipoyl synthase, chloroplastic, found in Ricinus communis (Castor bean).